A 363-amino-acid chain; its full sequence is Serpentine receptor class T-55 (363 aa).

An N-terminal signal peptide occupies residues 1–18 (MKLRHFLIFLMLIPISSS). 7 consecutive transmembrane segments (helical) span residues 70-90 (IYYISSGLFFQLIGWPVIWVF), 107-127 (VFIGLIEITEIWGNSVFPGFV), 143-163 (IVGKMTMVQWVLGSSSAAFLG), 187-207 (WLTVLFFYACYGSIFFDTVLF), 231-251 (FLYFHNIIVATTLILVYACLC), 278-298 (ICISLTYAIPAISFVTMFVLP), and 303-323 (FFHVSDITYQLSGGLPFIMYI).

Belongs to the nematode receptor-like protein srt family.

The protein resides in the membrane. The protein is Serpentine receptor class T-55 (srt-55) of Caenorhabditis elegans.